A 444-amino-acid polypeptide reads, in one-letter code: U-box domain-containing protein 31 (444 aa).

One can recognise a U-box domain in the interval Glu59 to Leu133. 2 ARM repeats span residues Lys301–Leu340 and Glu343–Lys382.

The enzyme catalyses S-ubiquitinyl-[E2 ubiquitin-conjugating enzyme]-L-cysteine + [acceptor protein]-L-lysine = [E2 ubiquitin-conjugating enzyme]-L-cysteine + N(6)-ubiquitinyl-[acceptor protein]-L-lysine.. The protein operates within protein modification; protein ubiquitination. Its function is as follows. Functions as an E3 ubiquitin ligase. In Arabidopsis thaliana (Mouse-ear cress), this protein is U-box domain-containing protein 31 (PUB31).